We begin with the raw amino-acid sequence, 1025 residues long: Leucyl-cystinyl aminopeptidase (1025 aa).

Position 1 is an N-acetylmethionine (M1). Residues 1 to 110 (MEPFTNDRLQ…GACSVPSART (110 aa)) lie on the Cytoplasmic side of the membrane. Residues 53–54 (LL) carry the Dileucine internalization motif motif. Phosphotyrosine is present on Y70. The Dileucine internalization motif motif lies at 76-77 (LL). Phosphoserine is present on residues S80 and S91. The interval 96 to 101 (RQSPDG) is tankyrase binding. Residues 111-131 (MVVCAFVIVVAVSVIMVIYLL) traverse the membrane as a helical; Signal-anchor for type II membrane protein segment. Residues 132–1025 (PRCTFTKEGC…KNLKSLTWWL (894 aa)) lie on the Extracellular side of the membrane. 5 N-linked (GlcNAc...) asparagine glycosylation sites follow: N145, N184, N215, N256, and N266. E295 contacts substrate. Residues N368 and N374 are each glycosylated (N-linked (GlcNAc...) asparagine). Residue 428 to 432 (GAMEN) participates in substrate binding. An N-linked (GlcNAc...) asparagine glycan is attached at N448. H464 contacts Zn(2+). Residue E465 is the Proton acceptor of the active site. Residues H468 and E487 each coordinate Zn(2+). N-linked (GlcNAc...) asparagine glycosylation is found at N525, N578, N598, N664, N682, N760, N834, N850, and N989.

Belongs to the peptidase M1 family. In terms of assembly, homodimer. Binds tankyrases 1 and 2. It depends on Zn(2+) as a cofactor. Post-translationally, the pregnancy serum form is derived from the membrane-bound form by proteolytic processing. In terms of processing, N-glycosylated. In terms of tissue distribution, highly expressed in placenta, heart, kidney and small intestine. Detected at lower levels in neuronal cells in the brain, in skeletal muscle, spleen, liver, testes and colon.

The protein resides in the cell membrane. Its subcellular location is the secreted. It catalyses the reaction Release of an N-terminal amino acid, Cys-|-Xaa-, in which the half-cystine residue is involved in a disulfide loop, notably in oxytocin or vasopressin. Hydrolysis rates on a range of aminoacyl arylamides exceed that for the cystinyl derivative, however.. Functionally, release of an N-terminal amino acid, cleaves before cysteine, leucine as well as other amino acids. Degrades peptide hormones such as oxytocin, vasopressin and angiotensin III, and plays a role in maintaining homeostasis during pregnancy. May be involved in the inactivation of neuronal peptides in the brain. Cleaves Met-enkephalin and dynorphin. Binds angiotensin IV and may be the angiotensin IV receptor in the brain. The sequence is that of Leucyl-cystinyl aminopeptidase (LNPEP) from Homo sapiens (Human).